Here is a 620-residue protein sequence, read N- to C-terminus: Chaperone protein HscA homolog (620 aa).

Belongs to the heat shock protein 70 family.

Chaperone involved in the maturation of iron-sulfur cluster-containing proteins. Has a low intrinsic ATPase activity which is markedly stimulated by HscB. The protein is Chaperone protein HscA homolog of Pseudomonas syringae pv. syringae (strain B728a).